We begin with the raw amino-acid sequence, 257 residues long: Tryptophan synthase alpha chain (257 aa).

Active-site proton acceptor residues include Glu44 and Asp55.

It belongs to the TrpA family. As to quaternary structure, tetramer of two alpha and two beta chains.

It carries out the reaction (1S,2R)-1-C-(indol-3-yl)glycerol 3-phosphate + L-serine = D-glyceraldehyde 3-phosphate + L-tryptophan + H2O. Its pathway is amino-acid biosynthesis; L-tryptophan biosynthesis; L-tryptophan from chorismate: step 5/5. Its function is as follows. The alpha subunit is responsible for the aldol cleavage of indoleglycerol phosphate to indole and glyceraldehyde 3-phosphate. The protein is Tryptophan synthase alpha chain of Chlamydia felis (strain Fe/C-56) (Chlamydophila felis).